Here is a 726-residue protein sequence, read N- to C-terminus: MIIVKVILPIPIRQYFTYLMPDFMCPIIGGRILVPFNSKDVIGIVASFYKKNNVDQANFKHIKALIDTESLYSNMVLDIISWISNNYHCPAGNLFFSILPKILHSDYIIKNKYICQWSITKKGQELNLNYFKRRKKQLYVLLILKKKHILSTELKKYNISKIILKKLEIQELCKVNLNYKISFKRKIIRTKKKLFFNKKISIVLNDVLKKQCFSSWLLTRVNLYLKVKFYLGLIQSVLYKGVQILILVPYIKNINTIAFFLEKYFNASIDVMHSKLTSSKYFSNWVRTKNGENSIVIGTGKSIFLPFLKLGLIILLEEHNLKYKSINQCRYNIRDLGILRAYKEKIPIILDSETPSLKTLNNVLHRKCFYIKLNKYNHVNQINNNIINLKTEKIKFGLSLTLINEIYKNFTGKQVLLIFNKFVLFFFVLMCQKCNEIFKCTNCDDYFEINQYRNILFCKFCLIQIKKPIFCYNCGSFSLIVFKIGAEEIKKEMHSIFPKIPFFFFLNEKNINKNILNTKSFEFAISSPCIIIVTEELVQNYYFPHVKLISLICIDNYFLSFNYRAMEYFAQFYINLNQLTRSTKKSCKIFIQTSFPNDINLKEICNNGYFSFSKKAMAIRKSFLLPPWSFQTIVYSASTNTKYNIIFLSLMRKILQKKSRKYNCFLWVLGPNNAFLSINKHKYFHQLLIQCSSRVALNNVLNESIDVINIFTISKRVKWFIDIEPN.

Ile234 provides a ligand contact to ATP. One can recognise a Helicase ATP-binding domain in the interval 234–373; it reads IQSVLYKGVQ…LHRKCFYIKL (140 aa). The DEAH box motif lies at 316-319; that stretch reads LEEH. Zn(2+) contacts are provided by Cys431, Cys434, Cys440, Cys443, Cys458, Cys461, Cys471, and Cys474.

It belongs to the helicase family. PriA subfamily. Component of the replication restart primosome. The cofactor is Zn(2+).

The catalysed reaction is Couples ATP hydrolysis with the unwinding of duplex DNA by translocating in the 3'-5' direction.. The enzyme catalyses ATP + H2O = ADP + phosphate + H(+). Its function is as follows. Initiates the restart of stalled replication forks, which reloads the replicative helicase on sites other than the origin of replication. Recognizes and binds to abandoned replication forks and remodels them to uncover a helicase loading site. Promotes assembly of the primosome at these replication forks. This chain is Replication restart protein PriA, found in Buchnera aphidicola subsp. Acyrthosiphon pisum (strain APS) (Acyrthosiphon pisum symbiotic bacterium).